Here is a 77-residue protein sequence, read N- to C-terminus: U8-lycotoxin-Ls1m (77 aa).

The first 20 residues, 1-20 (MKLMIFTGLVLFAIVRLIEA), serve as a signal peptide directing secretion. Positions 21–26 (QAENEK) are excised as a propeptide.

Belongs to the neurotoxin 19 (CSTX) family. 08 (U8-Lctx) subfamily. In terms of processing, contains 4 disulfide bonds. Expressed by the venom gland.

Its subcellular location is the secreted. The protein is U8-lycotoxin-Ls1m of Lycosa singoriensis (Wolf spider).